A 368-amino-acid chain; its full sequence is Agmatine deiminase (368 aa).

The Amidino-cysteine intermediate role is filled by Cys-357.

It belongs to the agmatine deiminase family. In terms of assembly, homodimer.

It carries out the reaction agmatine + H2O = N-carbamoylputrescine + NH4(+). The protein operates within amine and polyamine biosynthesis; putrescine biosynthesis via agmatine pathway; N-carbamoylputrescine from agmatine: step 1/1. Its function is as follows. Mediates the hydrolysis of agmatine into N-carbamoylputrescine in the arginine decarboxylase (ADC) pathway of putrescine biosynthesis, a basic polyamine. This Pseudomonas syringae pv. tomato (strain ATCC BAA-871 / DC3000) protein is Agmatine deiminase.